Reading from the N-terminus, the 97-residue chain is Large ribosomal subunit protein bL28 (97 aa).

Belongs to the bacterial ribosomal protein bL28 family.

This is Large ribosomal subunit protein bL28 from Rickettsia africae (strain ESF-5).